A 540-amino-acid chain; its full sequence is Chaperonin GroEL 2 (540 aa).

ATP-binding positions include 29–32, 86–90, Gly413, 476–478, and Asp492; these read TLGP, DGTTT, and NAA.

It belongs to the chaperonin (HSP60) family. In terms of assembly, forms a cylinder of 14 subunits composed of two heptameric rings stacked back-to-back. Interacts with the co-chaperonin GroES.

It localises to the cytoplasm. The catalysed reaction is ATP + H2O + a folded polypeptide = ADP + phosphate + an unfolded polypeptide.. Its function is as follows. Together with its co-chaperonin GroES, plays an essential role in assisting protein folding. The GroEL-GroES system forms a nano-cage that allows encapsulation of the non-native substrate proteins and provides a physical environment optimized to promote and accelerate protein folding. The sequence is that of Chaperonin GroEL 2 from Streptomyces albus G.